Here is a 690-residue protein sequence, read N- to C-terminus: Elongation factor G (690 aa).

A tr-type G domain is found at 8–283 (EDYRNFGIMA…AVVDYLPSPI (276 aa)). GTP-binding positions include 17–24 (AHIDAGKT), 81–85 (DTPGH), and 135–138 (NKMD).

It belongs to the TRAFAC class translation factor GTPase superfamily. Classic translation factor GTPase family. EF-G/EF-2 subfamily.

The protein localises to the cytoplasm. In terms of biological role, catalyzes the GTP-dependent ribosomal translocation step during translation elongation. During this step, the ribosome changes from the pre-translocational (PRE) to the post-translocational (POST) state as the newly formed A-site-bound peptidyl-tRNA and P-site-bound deacylated tRNA move to the P and E sites, respectively. Catalyzes the coordinated movement of the two tRNA molecules, the mRNA and conformational changes in the ribosome. The sequence is that of Elongation factor G from Bradyrhizobium diazoefficiens (strain JCM 10833 / BCRC 13528 / IAM 13628 / NBRC 14792 / USDA 110).